A 453-amino-acid polypeptide reads, in one-letter code: Folate transporter 1 (453 aa).

An N-linked (GlcNAc...) asparagine glycan is attached at Asn-36. The next 5 membrane-spanning stretches (helical) occupy residues 48–68 (PYWT…TDIL), 73–93 (IVMI…FGKG), 102–122 (VSFG…YSIV), 136–156 (AAAL…ISTH), and 161–181 (LVLN…AIFL). Residue Asn-260 is glycosylated (N-linked (GlcNAc...) asparagine). Helical transmembrane passes span 276–296 (VANG…SLFI), 306–326 (HGQM…YLCS), 331–351 (VLVA…LITA), 368–388 (IFGC…LVVV), and 401–421 (FVIY…FFMI).

It belongs to the reduced folate carrier (RFC) transporter (TC 2.A.48) family. Highly expressed in pharynx and posterior part of the intestine. Expressed at lower levels in the body wall muscles, head muscles, and vulva muscles. Highly expressed in the intestine of the early larva, levels decrease in the later stages of development.

The protein localises to the membrane. Folate transporter. The chain is Folate transporter 1 (folt-1) from Caenorhabditis elegans.